The primary structure comprises 187 residues: Elongation factor P (187 aa).

This sequence belongs to the elongation factor P family.

The protein localises to the cytoplasm. It functions in the pathway protein biosynthesis; polypeptide chain elongation. Involved in peptide bond synthesis. Stimulates efficient translation and peptide-bond synthesis on native or reconstituted 70S ribosomes in vitro. Probably functions indirectly by altering the affinity of the ribosome for aminoacyl-tRNA, thus increasing their reactivity as acceptors for peptidyl transferase. The sequence is that of Elongation factor P from Synechococcus sp. (strain CC9605).